We begin with the raw amino-acid sequence, 31 residues long: Basic phospholipase A2 13 (31 aa).

Belongs to the phospholipase A2 family. Group I subfamily. Requires Ca(2+) as cofactor. In terms of tissue distribution, expressed by the venom gland.

It localises to the secreted. The catalysed reaction is a 1,2-diacyl-sn-glycero-3-phosphocholine + H2O = a 1-acyl-sn-glycero-3-phosphocholine + a fatty acid + H(+). In terms of biological role, snake venom phospholipase A2 (PLA2) that inhibits neuromuscular transmission by blocking acetylcholine release from the nerve termini. PLA2 catalyzes the calcium-dependent hydrolysis of the 2-acyl groups in 3-sn-phosphoglycerides. This is Basic phospholipase A2 13 from Bungarus fasciatus (Banded krait).